The following is a 176-amino-acid chain: ATP-dependent protease subunit HslV (176 aa).

Thr5 is an active-site residue. The Na(+) site is built by Ala161, Cys164, and Thr167.

Belongs to the peptidase T1B family. HslV subfamily. In terms of assembly, a double ring-shaped homohexamer of HslV is capped on each side by a ring-shaped HslU homohexamer. The assembly of the HslU/HslV complex is dependent on binding of ATP.

The protein resides in the cytoplasm. The enzyme catalyses ATP-dependent cleavage of peptide bonds with broad specificity.. With respect to regulation, allosterically activated by HslU binding. Its function is as follows. Protease subunit of a proteasome-like degradation complex believed to be a general protein degrading machinery. The chain is ATP-dependent protease subunit HslV from Pelotomaculum thermopropionicum (strain DSM 13744 / JCM 10971 / SI).